Here is a 443-residue protein sequence, read N- to C-terminus: uncharacterized protein (443 aa).

A run of 10 helical transmembrane segments spans residues 7–29 (VSLY…MLNT), 68–87 (YISS…SIFT), 94–111 (VLSL…YAIF), 121–143 (VTLF…SMFA), 150–164 (IVII…SLTC), 179–201 (IIST…YIFF), 206–225 (LIIK…FAIS), 358–375 (IRFI…FIRN), 382–399 (LFVV…SFFG), and 409–431 (LFGM…IYKI).

The protein resides in the cell membrane. This is an uncharacterized protein from Escherichia coli (strain K12).